Here is a 181-residue protein sequence, read N- to C-terminus: Adenine phosphoribosyltransferase (181 aa).

The protein belongs to the purine/pyrimidine phosphoribosyltransferase family. As to quaternary structure, homodimer.

It is found in the cytoplasm. It carries out the reaction AMP + diphosphate = 5-phospho-alpha-D-ribose 1-diphosphate + adenine. The protein operates within purine metabolism; AMP biosynthesis via salvage pathway; AMP from adenine: step 1/1. Catalyzes a salvage reaction resulting in the formation of AMP, that is energically less costly than de novo synthesis. This is Adenine phosphoribosyltransferase from Aeromonas salmonicida (strain A449).